Here is a 275-residue protein sequence, read N- to C-terminus: Expansin-A23 (275 aa).

A signal peptide spans 1–27 (MNLLGKMIYVEGFMMIMATLLVSMSYG). One can recognise an Expansin-like EG45 domain in the interval 72 to 182 (QGACGYGDLF…RRISCARTGG (111 aa)). One can recognise an Expansin-like CBD domain in the interval 192–271 (YFLMILPYNV…NWGFGQTFDG (80 aa)).

The protein belongs to the expansin family. Expansin A subfamily.

It is found in the secreted. The protein resides in the cell wall. It localises to the membrane. Functionally, causes loosening and extension of plant cell walls by disrupting non-covalent bonding between cellulose microfibrils and matrix glucans. No enzymatic activity has been found. This Arabidopsis thaliana (Mouse-ear cress) protein is Expansin-A23 (EXPA23).